The sequence spans 790 residues: PAN2-PAN3 deadenylation complex subunit PAN3 (790 aa).

2 disordered regions span residues 166 to 191 (IAQQQPQHPQKQQQHPPSVGGGAVSA) and 235 to 259 (AMISGAGPGEKSPPHGMTPHGASPI). Low complexity predominate over residues 168-191 (QQQPQHPQKQQQHPPSVGGGAVSA). The interval 369-655 (DAAEAAQHAL…SVTDLMPMIG (287 aa)) is pseudokinase domain. ATP contacts are provided by residues R423, 472-479 (DYHPGSQT), and 552-553 (TK). Residues 656 to 694 (ARFYTQLDALQSKIDMQEDELAKEMENGRLYRILVKLNS) adopt a coiled-coil conformation. The segment at 695 to 790 (INERPDFNLD…FSELMSSAAN (96 aa)) is knob domain.

Belongs to the protein kinase superfamily. PAN3 family. In terms of assembly, homodimer. Forms a heterotrimer with a catalytic subunit PAN2 to form the poly(A)-nuclease (PAN) deadenylation complex. Interacts (via PAM-2 motif) with poly(A)-binding protein (via PABC domain), conferring substrate specificity of the enzyme complex. Interacts with the GW182 family protein gw. Interacts with Gyf.

It is found in the cytoplasm. The protein localises to the P-body. Functionally, regulatory subunit of the poly(A)-nuclease (PAN) deadenylation complex, one of two cytoplasmic mRNA deadenylases involved in general and miRNA-mediated mRNA turnover. PAN specifically shortens poly(A) tails of RNA and the activity is stimulated by poly(A)-binding protein (PABP). PAN deadenylation is followed by rapid degradation of the shortened mRNA tails by the CCR4-NOT complex. Deadenylated mRNAs are then degraded by two alternative mechanisms, namely exosome-mediated 3'-5' exonucleolytic degradation, or deadenylation-dependent mRNA decaping and subsequent 5'-3' exonucleolytic degradation by XRN1. PAN3 acts as a positive regulator for PAN activity, recruiting the catalytic subunit PAN2 to mRNA via its interaction with RNA and PABP, and to miRNA targets via its interaction with GW182 family proteins. In Drosophila melanogaster (Fruit fly), this protein is PAN2-PAN3 deadenylation complex subunit PAN3.